We begin with the raw amino-acid sequence, 207 residues long: Outer-membrane lipoprotein LolB (207 aa).

Residues 1 to 21 (MPMRKRHFYRLLPLASLLLAA) form the signal peptide. Cysteine 22 is lipidated: N-palmitoyl cysteine. The S-diacylglycerol cysteine moiety is linked to residue cysteine 22.

Belongs to the LolB family. Monomer.

It is found in the cell outer membrane. Its function is as follows. Plays a critical role in the incorporation of lipoproteins in the outer membrane after they are released by the LolA protein. The sequence is that of Outer-membrane lipoprotein LolB from Yersinia pseudotuberculosis serotype O:3 (strain YPIII).